Reading from the N-terminus, the 335-residue chain is tRNA N6-adenosine threonylcarbamoyltransferase (335 aa).

2 residues coordinate Fe cation: H111 and H115. Residues 133-137 (LISGG), D166, G179, and N276 contribute to the substrate site. D301 lines the Fe cation pocket.

It belongs to the KAE1 / TsaD family. Fe(2+) serves as cofactor.

Its subcellular location is the cytoplasm. The catalysed reaction is L-threonylcarbamoyladenylate + adenosine(37) in tRNA = N(6)-L-threonylcarbamoyladenosine(37) in tRNA + AMP + H(+). Its function is as follows. Required for the formation of a threonylcarbamoyl group on adenosine at position 37 (t(6)A37) in tRNAs that read codons beginning with adenine. Is involved in the transfer of the threonylcarbamoyl moiety of threonylcarbamoyl-AMP (TC-AMP) to the N6 group of A37, together with TsaE and TsaB. TsaD likely plays a direct catalytic role in this reaction. The chain is tRNA N6-adenosine threonylcarbamoyltransferase from Wolbachia sp. subsp. Drosophila simulans (strain wRi).